A 358-amino-acid polypeptide reads, in one-letter code: MSAYCGKYKDELIKNAAYIGTPGKGILAADESTGTIGKRFASINVENVEENRRSLRELLFCTPGALQYLSGVILFEETLYQKTKDGKPFVDVLKEGGVLPGIKVDKGTIEVAGTEKETTTQGHDDLGKRCAKYYEAGARFAKWRAVLKIGPNEPSQLAIDLNAQGLARYAIICQENGLVPIVEPEILVDGPHDIDRCAYVSEVVLAACYKALNEHHVLLEGTLLKPNMVTPGSDAKKVSPEVIAEYTVRTLQRTVPAAVPAIVFLSGGQSEEEATLNLNAMNKLSTKKPWSLSFSFGRALQQSTLKAWSGKAENIEKARAAFLTRCKANSEATLGTYKGDAVLGEGASESLHVKDYKY.

Residue arginine 39 participates in substrate binding. The active-site Proton acceptor is glutamate 183. Lysine 225 functions as the Schiff-base intermediate with dihydroxyacetone-P in the catalytic mechanism. Residues 266–268 (SGG) and arginine 298 contribute to the substrate site.

Belongs to the class I fructose-bisphosphate aldolase family. In terms of assembly, homotetramer. Expressed in callus.

The protein resides in the cytoplasm. It localises to the cytosol. It catalyses the reaction beta-D-fructose 1,6-bisphosphate = D-glyceraldehyde 3-phosphate + dihydroxyacetone phosphate. It participates in carbohydrate degradation; glycolysis; D-glyceraldehyde 3-phosphate and glycerone phosphate from D-glucose: step 4/4. Its function is as follows. Fructose-bisphosphate aldolase that plays a key role in glycolysis and gluconeogenesis. Involved in gibberellin-mediated root growth. May be regulated by CDPK13. Associates with vacuolar proton ATPase (V-ATPase) and may regulate the V-ATPase-mediated control of root cell elongation. This chain is Fructose-bisphosphate aldolase 1, cytoplasmic, found in Oryza sativa subsp. japonica (Rice).